The chain runs to 357 residues: S-adenosylmethionine:tRNA ribosyltransferase-isomerase (357 aa).

This sequence belongs to the QueA family. Monomer.

The protein resides in the cytoplasm. The catalysed reaction is 7-aminomethyl-7-carbaguanosine(34) in tRNA + S-adenosyl-L-methionine = epoxyqueuosine(34) in tRNA + adenine + L-methionine + 2 H(+). The protein operates within tRNA modification; tRNA-queuosine biosynthesis. In terms of biological role, transfers and isomerizes the ribose moiety from AdoMet to the 7-aminomethyl group of 7-deazaguanine (preQ1-tRNA) to give epoxyqueuosine (oQ-tRNA). The polypeptide is S-adenosylmethionine:tRNA ribosyltransferase-isomerase (Phenylobacterium zucineum (strain HLK1)).